Reading from the N-terminus, the 150-residue chain is Large ribosomal subunit protein uL23 (150 aa).

The segment at 1 to 24 (MNKENKTQAVNKAKNTAKVAKKGS) is disordered. A compositionally biased stretch (low complexity) spans 7-18 (TQAVNKAKNTAK).

This sequence belongs to the universal ribosomal protein uL23 family.

This Tetrahymena thermophila (strain SB210) protein is Large ribosomal subunit protein uL23 (RPL23A).